The primary structure comprises 151 residues: Small ribosomal subunit protein uS15 (151 aa).

Positions Met1–Arg16 are enriched in basic residues. The tract at residues Met1 to Pro20 is disordered.

Belongs to the universal ribosomal protein uS15 family. Part of the 30S ribosomal subunit.

This Pyrobaculum aerophilum (strain ATCC 51768 / DSM 7523 / JCM 9630 / CIP 104966 / NBRC 100827 / IM2) protein is Small ribosomal subunit protein uS15.